Reading from the N-terminus, the 264-residue chain is ATP synthase subunit a (264 aa).

6 consecutive transmembrane segments (helical) span residues 29–49 (TWHI…LWIF), 90–110 (IAPL…MDMI), 134–154 (DVNI…FYSI), 177–197 (IPVN…SLAL), 208–228 (LIFI…TLGV), and 235–255 (LIFH…LTIV).

The protein belongs to the ATPase A chain family. In terms of assembly, F-type ATPases have 2 components, CF(1) - the catalytic core - and CF(0) - the membrane proton channel. CF(1) has five subunits: alpha(3), beta(3), gamma(1), delta(1), epsilon(1). CF(0) has three main subunits: a(1), b(2) and c(9-12). The alpha and beta chains form an alternating ring which encloses part of the gamma chain. CF(1) is attached to CF(0) by a central stalk formed by the gamma and epsilon chains, while a peripheral stalk is formed by the delta and b chains.

It is found in the cell inner membrane. Functionally, key component of the proton channel; it plays a direct role in the translocation of protons across the membrane. This is ATP synthase subunit a from Shewanella baltica (strain OS223).